The following is a 563-amino-acid chain: Methylcrotonoyl-CoA carboxylase beta chain, mitochondrial (563 aa).

The N-terminal 22 residues, 1–22 (MWAVLRLALRPCARASPAGPRA), are a transit peptide targeting the mitochondrion. The 258-residue stretch at 49 to 306 (MKALVNQLHE…QKKLDVTIEP (258 aa)) folds into the CoA carboxyltransferase N-terminal domain. Residues 49–555 (MKALVNQLHE…SAALNAPIEK (507 aa)) form a carboxyltransferase region. Lysine 70 is subject to N6-acetyllysine; alternate. At lysine 70 the chain carries N6-succinyllysine; alternate. Lysine 141 bears the N6-succinyllysine mark. Residues 309–555 (EPLFPADELY…SAALNAPIEK (247 aa)) enclose the CoA carboxyltransferase C-terminal domain. The tract at residues 343-372 (RFTEFKAFYGDTLVTGFARIFGYPVGIVGN) is acyl-CoA binding. Position 495 is an N6-acetyllysine; alternate (lysine 495). The residue at position 495 (lysine 495) is an N6-succinyllysine; alternate. Lysine 511 is modified (N6-acetyllysine).

This sequence belongs to the AccD/PCCB family. Probably a dodecamer composed of six biotin-containing alpha subunits (MCCC1) and six beta (MCCC2) subunits.

Its subcellular location is the mitochondrion matrix. It catalyses the reaction 3-methylbut-2-enoyl-CoA + hydrogencarbonate + ATP = 3-methyl-(2E)-glutaconyl-CoA + ADP + phosphate + H(+). Its pathway is amino-acid degradation; L-leucine degradation; (S)-3-hydroxy-3-methylglutaryl-CoA from 3-isovaleryl-CoA: step 2/3. Functionally, carboxyltransferase subunit of the 3-methylcrotonyl-CoA carboxylase, an enzyme that catalyzes the conversion of 3-methylcrotonyl-CoA to 3-methylglutaconyl-CoA, a critical step for leucine and isovaleric acid catabolism. The chain is Methylcrotonoyl-CoA carboxylase beta chain, mitochondrial (MCCC2) from Homo sapiens (Human).